A 637-amino-acid chain; its full sequence is Threonine--tRNA ligase (637 aa).

Positions 1–61 (MLNITLPDGS…TEDSSVQIIT (61 aa)) constitute a TGS domain. A catalytic region spans residues 242 to 533 (DHRKLGKQLD…LIENHAGSFP (292 aa)). Zn(2+) is bound by residues Cys333, His384, and His510.

Belongs to the class-II aminoacyl-tRNA synthetase family. Homodimer. Zn(2+) is required as a cofactor.

The protein resides in the cytoplasm. The catalysed reaction is tRNA(Thr) + L-threonine + ATP = L-threonyl-tRNA(Thr) + AMP + diphosphate + H(+). Its function is as follows. Catalyzes the attachment of threonine to tRNA(Thr) in a two-step reaction: L-threonine is first activated by ATP to form Thr-AMP and then transferred to the acceptor end of tRNA(Thr). Also edits incorrectly charged L-seryl-tRNA(Thr). This chain is Threonine--tRNA ligase, found in Neisseria meningitidis serogroup C (strain 053442).